Reading from the N-terminus, the 166-residue chain is Probable DHNTP pyrophosphohydrolase (166 aa).

The Nudix hydrolase domain occupies 42-166 (DLQLSASALV…FKKYYRYKNI (125 aa)). A Nudix box motif is present at residues 73-94 (GHVELKESPLDTAIREFHEETG). The Mg(2+) site is built by Glu88 and Glu92.

This sequence belongs to the Nudix hydrolase family. Monomer. The cofactor is Mg(2+).

Its pathway is cofactor biosynthesis; tetrahydrofolate biosynthesis; 2-amino-4-hydroxy-6-hydroxymethyl-7,8-dihydropteridine diphosphate from 7,8-dihydroneopterin triphosphate: step 1/4. In terms of biological role, probably mediates the removal of pyrophosphate from dihydroneopterin triphosphate (DHNTP), a possible step in the pterin branch of the folate synthesis pathway. The chain is Probable DHNTP pyrophosphohydrolase (folQ) from Lactococcus lactis subsp. cremoris (strain MG1363).